The following is a 642-amino-acid chain: Threonine--tRNA ligase (642 aa).

The region spanning Met1 to Thr61 is the TGS domain. A catalytic region spans residues Asp243–Pro534. Cys334, His385, and His511 together coordinate Zn(2+).

The protein belongs to the class-II aminoacyl-tRNA synthetase family. As to quaternary structure, homodimer. Zn(2+) is required as a cofactor.

Its subcellular location is the cytoplasm. The catalysed reaction is tRNA(Thr) + L-threonine + ATP = L-threonyl-tRNA(Thr) + AMP + diphosphate + H(+). Catalyzes the attachment of threonine to tRNA(Thr) in a two-step reaction: L-threonine is first activated by ATP to form Thr-AMP and then transferred to the acceptor end of tRNA(Thr). Also edits incorrectly charged L-seryl-tRNA(Thr). The sequence is that of Threonine--tRNA ligase from Shewanella pealeana (strain ATCC 700345 / ANG-SQ1).